The chain runs to 304 residues: ATP phosphoribosyltransferase (304 aa).

It belongs to the ATP phosphoribosyltransferase family. Long subfamily. Requires Mg(2+) as cofactor.

The protein resides in the cytoplasm. The enzyme catalyses 1-(5-phospho-beta-D-ribosyl)-ATP + diphosphate = 5-phospho-alpha-D-ribose 1-diphosphate + ATP. It functions in the pathway amino-acid biosynthesis; L-histidine biosynthesis; L-histidine from 5-phospho-alpha-D-ribose 1-diphosphate: step 1/9. With respect to regulation, feedback inhibited by histidine. Functionally, catalyzes the condensation of ATP and 5-phosphoribose 1-diphosphate to form N'-(5'-phosphoribosyl)-ATP (PR-ATP). Has a crucial role in the pathway because the rate of histidine biosynthesis seems to be controlled primarily by regulation of HisG enzymatic activity. In Xylella fastidiosa (strain M12), this protein is ATP phosphoribosyltransferase.